We begin with the raw amino-acid sequence, 38 residues long: Beta-galactosidase (38 aa).

This sequence belongs to the glycosyl hydrolase 35 family. Heterodimer of a large and a small subunit. Post-translationally, the small subunit is N-glycosylated.

The enzyme catalyses Hydrolysis of terminal non-reducing beta-D-galactose residues in beta-D-galactosides.. Functionally, involved in cell wall degradation. Degrades polysaccharides containing beta-(1--&gt;4)-linked galactans, acting as an exo-(1--&gt;4)-beta-D-galactanase. This chain is Beta-galactosidase, found in Hordeum vulgare (Barley).